A 1226-amino-acid polypeptide reads, in one-letter code: Cytosolic carboxypeptidase 1 (1226 aa).

The interval threonine 599 to proline 619 is disordered. The Peptidase M14 domain occupies tyrosine 848 to lysine 1138. Zn(2+) contacts are provided by histidine 920, glutamate 923, and histidine 1017. Glutamate 1102 acts as the Proton donor/acceptor in catalysis. Phosphoserine is present on serine 1168. The disordered stretch occupies residues tyrosine 1206–proline 1226.

Belongs to the peptidase M14 family. In terms of assembly, interacts with MYLK. Zn(2+) is required as a cofactor.

Its subcellular location is the cytoplasm. It localises to the cytosol. It is found in the nucleus. The protein resides in the mitochondrion. The catalysed reaction is (L-glutamyl)(n+1)-gamma-L-glutamyl-L-glutamyl-[protein] + H2O = (L-glutamyl)(n)-gamma-L-glutamyl-L-glutamyl-[protein] + L-glutamate. It carries out the reaction C-terminal L-alpha-aminoacyl-L-glutamyl-L-glutamyl-[tubulin] + H2O = C-terminal L-alpha-aminoacyl-L-glutamyl-[tubulin] + L-glutamate. Metallocarboxypeptidase that mediates protein deglutamylation of tubulin and non-tubulin target proteins. Catalyzes the removal of polyglutamate side chains present on the gamma-carboxyl group of glutamate residues within the C-terminal tail of alpha- and beta-tubulin. Specifically cleaves tubulin long-side-chains, while it is not able to remove the branching point glutamate. Also catalyzes the removal of polyglutamate residues from the carboxy-terminus of alpha-tubulin as well as non-tubulin proteins such as MYLK. Involved in KLF4 deglutamylation which promotes KLF4 proteasome-mediated degradation, thereby negatively regulating cell pluripotency maintenance and embryogenesis. This chain is Cytosolic carboxypeptidase 1, found in Homo sapiens (Human).